Here is a 771-residue protein sequence, read N- to C-terminus: Kinase suppressor of Ras A (771 aa).

The span at 152–169 (SRTSSGSTDEPSGQSTPA) shows a compositional bias: polar residues. Positions 152–172 (SRTSSGSTDEPSGQSTPAIVT) are disordered. The Phorbol-ester/DAG-type zinc-finger motif lies at 215 to 269 (PHKWHRSTKFRFSGDAVCHFCQRPLGFGFLNAWEKCRSCKWKVHTQCKGRVGDSC). Disordered regions lie at residues 290 to 339 (GMWK…ISGN) and 414 to 433 (DSTGSQEVDSEAAPSQEAVD). Low complexity predominate over residues 318–331 (SSSSTNSSAPSTPA). Residues 477-748 (DKQAPIIGRG…TDINLKLTAL (272 aa)) form the Protein kinase domain. ATP-binding positions include 483–491 (IGRGRFGKV) and Lys-503. Asp-600 (proton acceptor) is an active-site residue.

The protein belongs to the protein kinase superfamily. TKL Ser/Thr protein kinase family. As to quaternary structure, interacts with mek-2. Mg(2+) serves as cofactor.

It carries out the reaction L-seryl-[protein] + ATP = O-phospho-L-seryl-[protein] + ADP + H(+). The catalysed reaction is L-threonyl-[protein] + ATP = O-phospho-L-threonyl-[protein] + ADP + H(+). Its function is as follows. Serine/threonine-protein kinase which positively regulates Ras-mediated signaling probably acting at the level of let-60/ras or/and lin-45/raf. Involved in sex myoblast migration. Plays a role in responses to M.nematophilum-mediated bacterial infection by promoting tail swelling and preventing constipation. Functions redundantly with ksr-2 in the Ras-mediated regulation of larval survival, the development of excretory canal and in mpk-1 phosphorylation in somatic cells. In addition, involved in determining vulval precursor cell fate during vulval induction independently of its kinase activity. Plays a role in egg-laying. This is Kinase suppressor of Ras A from Caenorhabditis elegans.